Here is a 96-residue protein sequence, read N- to C-terminus: Co-chaperonin GroES (96 aa).

It belongs to the GroES chaperonin family. As to quaternary structure, heptamer of 7 subunits arranged in a ring. Interacts with the chaperonin GroEL.

The protein resides in the cytoplasm. In terms of biological role, together with the chaperonin GroEL, plays an essential role in assisting protein folding. The GroEL-GroES system forms a nano-cage that allows encapsulation of the non-native substrate proteins and provides a physical environment optimized to promote and accelerate protein folding. GroES binds to the apical surface of the GroEL ring, thereby capping the opening of the GroEL channel. This Ralstonia nicotianae (strain ATCC BAA-1114 / GMI1000) (Ralstonia solanacearum) protein is Co-chaperonin GroES.